The sequence spans 859 residues: Envelope glycoprotein (859 aa).

A propeptide spanning residues 1-6 is cleaved from the precursor; it reads MVSIAF. The Extracellular portion of the chain corresponds to 7–614; the sequence is YGGIPGGIST…KDLWSHIGNW (608 aa). N-linked (GlcNAc...) asparagine; by host glycans are attached at residues Asn-40, Asn-112, Asn-141, Asn-148, Asn-186, Asn-214, Asn-233, Asn-244, Asn-340, Asn-368, Asn-399, Asn-406, Asn-411, and Asn-422. The fusion peptide stretch occupies residues 446–466; the sequence is FGISAIVAAIVAATAIAASAT. 2 N-linked (GlcNAc...) asparagine; by host glycosylation sites follow: Asn-483 and Asn-490. The tract at residues 498–513 is immunosuppression; the sequence is LIERQIKILYAMILQT. Asn-550 and Asn-557 each carry an N-linked (GlcNAc...) asparagine; by host glycan. Coiled coils occupy residues 576 to 624 and 663 to 699; these read ILTT…SIIK and KKFH…YYKQ. Residues 615 to 635 form a helical membrane-spanning segment; sequence IPGLGASIIKYIVMFLLIYLL. Residues 636-859 are Cytoplasmic-facing; sequence LTSSPKILRA…TSHVSMPQYV (224 aa). Residues 745–764 are disordered; it reads AAINEHKNGSGGNNPHQGSL.

In terms of assembly, the mature envelope protein (Env) consists of a trimer of SU-TM heterodimers attached by noncovalent interactions or by a labile interchain disulfide bond. Post-translationally, specific enzymatic cleavages in vivo yield mature proteins. Envelope glycoproteins are synthesized as an inactive precursor that is N-glycosylated and processed likely by host cell furin or by a furin-like protease in the Golgi to yield the mature SU and TM proteins. The cleavage site between SU and TM requires the minimal sequence [KR]-X-[KR]-R.

The protein localises to the virion membrane. It is found in the host cell membrane. Its function is as follows. The surface protein (SU) attaches the virus to the host cell by binding to its receptor. This interaction triggers the refolding of the transmembrane protein (TM) and is thought to activate its fusogenic potential by unmasking its fusion peptide. Fusion occurs at the host cell plasma membrane. In terms of biological role, the transmembrane protein (TM) acts as a class I viral fusion protein. Under the current model, the protein has at least 3 conformational states: pre-fusion native state, pre-hairpin intermediate state, and post-fusion hairpin state. During viral and target cell membrane fusion, the coiled coil regions (heptad repeats) assume a trimer-of-hairpins structure, positioning the fusion peptide in close proximity to the C-terminal region of the ectodomain. The formation of this structure appears to drive apposition and subsequent fusion of viral and target cell membranes. Membranes fusion leads to delivery of the nucleocapsid into the cytoplasm. The sequence is that of Envelope glycoprotein (env) from Equus asinus (Donkey).